The following is a 61-amino-acid chain: Large ribosomal subunit protein bL28 (61 aa).

The protein belongs to the bacterial ribosomal protein bL28 family.

This Lactobacillus gasseri (strain ATCC 33323 / DSM 20243 / BCRC 14619 / CIP 102991 / JCM 1131 / KCTC 3163 / NCIMB 11718 / NCTC 13722 / AM63) protein is Large ribosomal subunit protein bL28.